The sequence spans 119 residues: uncharacterized protein (119 aa).

This is an uncharacterized protein from Escherichia coli (strain K12).